An 80-amino-acid chain; its full sequence is Acyl carrier protein (80 aa).

The region spanning 2-77 (SEINQKVVDI…QVVEYLEKRL (76 aa)) is the Carrier domain. An O-(pantetheine 4'-phosphoryl)serine modification is found at serine 37.

This sequence belongs to the acyl carrier protein (ACP) family. In terms of processing, 4'-phosphopantetheine is transferred from CoA to a specific serine of apo-ACP by AcpS. This modification is essential for activity because fatty acids are bound in thioester linkage to the sulfhydryl of the prosthetic group.

The protein localises to the cytoplasm. It functions in the pathway lipid metabolism; fatty acid biosynthesis. In terms of biological role, carrier of the growing fatty acid chain in fatty acid biosynthesis. The protein is Acyl carrier protein of Amoebophilus asiaticus (strain 5a2).